Reading from the N-terminus, the 483-residue chain is Glutamyl-tRNA(Gln) amidotransferase subunit A (483 aa).

Catalysis depends on charge relay system residues Lys76 and Ser151. Ser175 functions as the Acyl-ester intermediate in the catalytic mechanism.

It belongs to the amidase family. GatA subfamily. In terms of assembly, heterotrimer of A, B and C subunits.

The catalysed reaction is L-glutamyl-tRNA(Gln) + L-glutamine + ATP + H2O = L-glutaminyl-tRNA(Gln) + L-glutamate + ADP + phosphate + H(+). Its function is as follows. Allows the formation of correctly charged Gln-tRNA(Gln) through the transamidation of misacylated Glu-tRNA(Gln) in organisms which lack glutaminyl-tRNA synthetase. The reaction takes place in the presence of glutamine and ATP through an activated gamma-phospho-Glu-tRNA(Gln). The protein is Glutamyl-tRNA(Gln) amidotransferase subunit A of Chromobacterium violaceum (strain ATCC 12472 / DSM 30191 / JCM 1249 / CCUG 213 / NBRC 12614 / NCIMB 9131 / NCTC 9757 / MK).